Here is a 200-residue protein sequence, read N- to C-terminus: General odorant-binding protein 70 (200 aa).

Residues 1 to 29 form the signal peptide; that stretch reads MRRQYSMWASTVAVIACGSALMLLHPVGA. Intrachain disulfides connect cysteine 105-cysteine 174 and cysteine 152-cysteine 183.

This sequence belongs to the PBP/GOBP family.

It is found in the secreted. Its function is as follows. Present in the aqueous fluid surrounding olfactory sensory dendrites and are thought to aid in the capture and transport of hydrophobic odorants into and through this fluid. This chain is General odorant-binding protein 70 (Obp70), found in Anopheles gambiae (African malaria mosquito).